The sequence spans 403 residues: Adenylate cyclase (403 aa).

Over residues 1 to 16 the composition is skewed to polar residues; that stretch reads MSTEHTNTPRADSPQS. Residues 1–37 form a disordered region; sequence MSTEHTNTPRADSPQSAAEAVRGARQHAPAATPAESD. Residues 31-60 are pyruvate binding; that stretch reads ATPAESDPILELAEAMEGPLRIPAHTPEAV. Residues 238–347 form the Guanylate cyclase domain; sequence AVGFADLVSY…PTVNMAARLT (110 aa). Positions 243 and 287 each coordinate Mg(2+).

It belongs to the adenylyl cyclase class-3 family. In terms of assembly, homodimer. Mg(2+) serves as cofactor.

It localises to the cytoplasm. The catalysed reaction is ATP = 3',5'-cyclic AMP + diphosphate. With respect to regulation, pyruvate-stimulated. Its function is as follows. Plays essential roles in regulation of cellular metabolism by catalyzing the synthesis of a second messenger, cAMP. The polypeptide is Adenylate cyclase (cya) (Glutamicibacter nicotianae (Arthrobacter nicotianae)).